A 390-amino-acid chain; its full sequence is MSDLENFVPTANIKVIGVGGGGNNSVETMIQAGIQGVEFIVANTDIQALQRSSAPNFIHLGENKRGLGAGANPEVGKKAAEESIVEIKEKLKGADMVIITSGMGGGTGTGASPIIAKIARELGALTISIVTTPFEFEGNLRNKNAQEGIKNLRAVSDSIIIISNNKLLEQYGDAPMKDSFLFADTILKHTVKTITDIIAIPAHINLDFADVKTVMKDKGDALIGIGRASGKDRAVKAAIHAISSPIIETSIQGASHTIINITGSANLTLTEVHSAVNVIKNAVGPEMNTIFGATINESIGDEIYVSVIATGLSSSKKFNSEQEIKDEVSSMLKTMEIDLQASETKTILINDPLPKDEKMVLTSLLDRDSKILEKDDSQDDTLPFFLKRNV.

Residues 20-24 (GGGNN), 106-108 (GTG), glutamate 137, arginine 141, and aspartate 184 contribute to the GTP site.

This sequence belongs to the FtsZ family. Homodimer. Polymerizes to form a dynamic ring structure in a strictly GTP-dependent manner. Interacts directly with several other division proteins.

Its subcellular location is the cytoplasm. Essential cell division protein that forms a contractile ring structure (Z ring) at the future cell division site. The regulation of the ring assembly controls the timing and the location of cell division. One of the functions of the FtsZ ring is to recruit other cell division proteins to the septum to produce a new cell wall between the dividing cells. Binds GTP and shows GTPase activity. The chain is Cell division protein FtsZ from Mycoplasmopsis pulmonis (strain UAB CTIP) (Mycoplasma pulmonis).